Reading from the N-terminus, the 224-residue chain is ATP synthase subunit a (224 aa).

Helical transmembrane passes span 17–37 (FSLNWLSTFLGLLMIPSIYWL), 72–92 (IFISLFSLILFNNFMGLFPYI), 99–119 (LTLTLSLALPLWLCFMLYGWI), 125–145 (MFAHLVPQGTPAILMPFMVCI), 166–186 (IAGHLLLTLLGNTGPSMSYIL), and 187–207 (VTFLLMAQIALLVLESAVAMI).

The protein belongs to the ATPase A chain family. In terms of assembly, F-type ATPases have 2 components, CF(1) - the catalytic core - and CF(0) - the membrane proton channel. CF(1) has five subunits: alpha(3), beta(3), gamma(1), delta(1), epsilon(1). CF(0) has three main subunits: a, b and c.

It is found in the mitochondrion inner membrane. Mitochondrial membrane ATP synthase (F(1)F(0) ATP synthase or Complex V) produces ATP from ADP in the presence of a proton gradient across the membrane which is generated by electron transport complexes of the respiratory chain. F-type ATPases consist of two structural domains, F(1) - containing the extramembraneous catalytic core and F(0) - containing the membrane proton channel, linked together by a central stalk and a peripheral stalk. During catalysis, ATP synthesis in the catalytic domain of F(1) is coupled via a rotary mechanism of the central stalk subunits to proton translocation. Key component of the proton channel; it may play a direct role in the translocation of protons across the membrane. This chain is ATP synthase subunit a (mt:ATPase6), found in Drosophila melanogaster (Fruit fly).